The following is a 309-amino-acid chain: Ribonuclease Z (309 aa).

Residues H63, H65, D67, H68, H145, D216, and H274 each contribute to the Zn(2+) site. The active-site Proton acceptor is D67.

It belongs to the RNase Z family. In terms of assembly, homodimer. Requires Zn(2+) as cofactor.

The enzyme catalyses Endonucleolytic cleavage of RNA, removing extra 3' nucleotides from tRNA precursor, generating 3' termini of tRNAs. A 3'-hydroxy group is left at the tRNA terminus and a 5'-phosphoryl group is left at the trailer molecule.. Zinc phosphodiesterase, which displays some tRNA 3'-processing endonuclease activity. Probably involved in tRNA maturation, by removing a 3'-trailer from precursor tRNA. This is Ribonuclease Z from Streptococcus pyogenes serotype M6 (strain ATCC BAA-946 / MGAS10394).